Reading from the N-terminus, the 323-residue chain is Beta-ketoacyl-[acyl-carrier-protein] synthase III (323 aa).

Residues Cys-113 and His-250 contribute to the active site. The tract at residues 251–255 is ACP-binding; sequence QANRR. Residue Asn-280 is part of the active site.

The protein belongs to the thiolase-like superfamily. FabH family. As to quaternary structure, homodimer.

It is found in the cytoplasm. The catalysed reaction is malonyl-[ACP] + acetyl-CoA + H(+) = 3-oxobutanoyl-[ACP] + CO2 + CoA. Its pathway is lipid metabolism; fatty acid biosynthesis. Its function is as follows. Catalyzes the condensation reaction of fatty acid synthesis by the addition to an acyl acceptor of two carbons from malonyl-ACP. Catalyzes the first condensation reaction which initiates fatty acid synthesis and may therefore play a role in governing the total rate of fatty acid production. Possesses both acetoacetyl-ACP synthase and acetyl transacylase activities. Its substrate specificity determines the biosynthesis of branched-chain and/or straight-chain of fatty acids. The sequence is that of Beta-ketoacyl-[acyl-carrier-protein] synthase III from Sinorhizobium medicae (strain WSM419) (Ensifer medicae).